The primary structure comprises 341 residues: Elongation factor Ts (341 aa).

The interval 80–83 is involved in Mg(2+) ion dislocation from EF-Tu; the sequence is TDFV.

It belongs to the EF-Ts family.

The protein localises to the cytoplasm. Its function is as follows. Associates with the EF-Tu.GDP complex and induces the exchange of GDP to GTP. It remains bound to the aminoacyl-tRNA.EF-Tu.GTP complex up to the GTP hydrolysis stage on the ribosome. The protein is Elongation factor Ts of Lactobacillus johnsonii (strain CNCM I-12250 / La1 / NCC 533).